A 227-amino-acid polypeptide reads, in one-letter code: Small ribosomal subunit protein uS7 (227 aa).

Composition is skewed to acidic residues over residues 1-12 (MSESDTDPDIDD) and 20-31 (NDVDVAVDESES). Positions 1-43 (MSESDTDPDIDDDAHNNGDNDVDVAVDESESAETTTDTDTASA) are disordered. Positions 32 to 43 (AETTTDTDTASA) are enriched in low complexity.

The protein belongs to the universal ribosomal protein uS7 family. As to quaternary structure, part of the 30S ribosomal subunit.

Its function is as follows. One of the primary rRNA binding proteins, it binds directly to 16S rRNA where it nucleates assembly of the head domain of the 30S subunit. Is located at the subunit interface close to the decoding center. The protein is Small ribosomal subunit protein uS7 of Haloquadratum walsbyi (strain DSM 16790 / HBSQ001).